The following is a 344-amino-acid chain: Interferon gamma receptor 1-like (344 aa).

The N-terminal stretch at Met-1–Gly-22 is a signal peptide. At Phe-23–Gly-229 the chain is on the extracellular side. One can recognise a Fibronectin type-III domain in the interval Val-24–Glu-102. N-linked (GlcNAc...) asparagine glycosylation is found at Asn-29, Asn-44, Asn-132, and Asn-189. The chain crosses the membrane as a helical span at residues Ile-230–Trp-250. The Cytoplasmic segment spans residues Leu-251–Leu-344. The interval Thr-300–Leu-344 is disordered.

The protein belongs to the type II cytokine receptor family. Highly expressed in brain. Also detected in spleen, heart, intestine, gill and kidney. In immune cell populations, detected at low levels in monocytes, peripheral blood leukocytes, splenocytes, neutrophils and mature macrophages.

Its subcellular location is the cell membrane. In terms of biological role, receptor which shows binding specificity for the cytokine ifng1 (interferon gamma 1). This chain is Interferon gamma receptor 1-like, found in Carassius auratus (Goldfish).